The chain runs to 406 residues: 5-cytosine rRNA methyltransferase NSUN4 (406 aa).

S-adenosyl-L-methionine is bound by residues Gly207, Gly208, Lys209, Asp226, Arg231, Asp259, Gly260, and Asp277. The active-site Nucleophile is Cys332.

It belongs to the class I-like SAM-binding methyltransferase superfamily. RsmB/NOP family.

It localises to the mitochondrion. The catalysed reaction is a cytidine in rRNA + S-adenosyl-L-methionine = a 5-methylcytidine in rRNA + S-adenosyl-L-homocysteine + H(+). It catalyses the reaction a cytidine in mRNA + S-adenosyl-L-methionine = a 5-methylcytidine in mRNA + S-adenosyl-L-homocysteine + H(+). Functionally, involved in mitochondrial ribosome large subunit biogenesis. In terms of biological role, mitochondrial RNA cytosine C(5)-methyltransferase that methylates cytosine to 5-methylcytosine (m5C) in various RNAs, such as rRNAs, mRNAs and some long non-coding RNAs (lncRNAs). Involved in mitochondrial ribosome small subunit (SSU) maturation by catalyzing methylation of mitochondrial 12S rRNA. This is 5-cytosine rRNA methyltransferase NSUN4 (nsun4) from Xenopus tropicalis (Western clawed frog).